The following is a 236-amino-acid chain: Eukaryotic translation initiation factor 3 subunit K (236 aa).

The PCI domain maps to 48–218 (CDCNANRTLL…EAKKAEIRED (171 aa)).

Belongs to the eIF-3 subunit K family.

It localises to the cytoplasm. In terms of biological role, component of the eukaryotic translation initiation factor 3 (eIF-3) complex, which is involved in protein synthesis of a specialized repertoire of mRNAs and, together with other initiation factors, stimulates binding of mRNA and methionyl-tRNAi to the 40S ribosome. The eIF-3 complex specifically targets and initiates translation of a subset of mRNAs involved in cell proliferation. The protein is Eukaryotic translation initiation factor 3 subunit K of Pyricularia oryzae (strain Y34) (Rice blast fungus).